The primary structure comprises 343 residues: MEKVDIKNFTLQELEAYIAGQGKERFRAKQIFKWLYQQDAREFADMTNLSKDFRQELEKTAWISNLDAEAVEASADGTKKYLFRLADGNAVESVLIPDEDRTTLCISSQVGCAMGCEFCLTGTFKLTRNLTTAEIVNQVCAVKRQEPVRNIVFMGMGEPLANLKNVVGALKILTDPDGFQFSTRKVTVSTSGLVPEMAELGASVTVNLAVSLNATTDEVRDRIMPINRRYPLKELLAACKAFPLPSRRWITIEYVMIRGVNDSLDDAKRLVRLISNIPSKVNLIPFNEHDGCTFQAPTQDSIDKFHKFLLDKHVTVITRSSRGSDISAACGQLKGRLDKAVKD.

The active-site Proton acceptor is Glu-92. One can recognise a Radical SAM core domain in the interval 98–325 (DEDRTTLCIS…VITRSSRGSD (228 aa)). A disulfide bridge links Cys-105 with Cys-330. Residues Cys-112, Cys-116, and Cys-119 each coordinate [4Fe-4S] cluster. S-adenosyl-L-methionine-binding positions include 157-158 (GE), Ser-189, 211-213 (SLN), and Asn-287. Cys-330 serves as the catalytic S-methylcysteine intermediate.

It belongs to the radical SAM superfamily. RlmN family. The cofactor is [4Fe-4S] cluster.

The protein resides in the cytoplasm. The enzyme catalyses adenosine(2503) in 23S rRNA + 2 reduced [2Fe-2S]-[ferredoxin] + 2 S-adenosyl-L-methionine = 2-methyladenosine(2503) in 23S rRNA + 5'-deoxyadenosine + L-methionine + 2 oxidized [2Fe-2S]-[ferredoxin] + S-adenosyl-L-homocysteine. The catalysed reaction is adenosine(37) in tRNA + 2 reduced [2Fe-2S]-[ferredoxin] + 2 S-adenosyl-L-methionine = 2-methyladenosine(37) in tRNA + 5'-deoxyadenosine + L-methionine + 2 oxidized [2Fe-2S]-[ferredoxin] + S-adenosyl-L-homocysteine. Specifically methylates position 2 of adenine 2503 in 23S rRNA and position 2 of adenine 37 in tRNAs. m2A2503 modification seems to play a crucial role in the proofreading step occurring at the peptidyl transferase center and thus would serve to optimize ribosomal fidelity. This chain is Dual-specificity RNA methyltransferase RlmN, found in Geotalea uraniireducens (strain Rf4) (Geobacter uraniireducens).